A 651-amino-acid chain; its full sequence is Maternal embryonic leucine zipper kinase (651 aa).

The Protein kinase domain maps to 11 to 263 (YELHETIGTG…MKNLLNHPWI (253 aa)). ATP contacts are provided by residues 17–25 (IGTGGFAKV) and Lys40. Thr56 bears the Phosphothreonine; by autocatalysis mark. The Proton acceptor role is filled by Asp132. Tyr163 carries the post-translational modification Phosphotyrosine; by autocatalysis. The residue at position 167 (Thr167) is a Phosphothreonine; by autocatalysis. Phosphoserine; by autocatalysis is present on residues Ser171 and Ser253. Residues 282 to 321 (LDDDCVTELSVHHRNNRQTMEDLISLWQYDHLTATYLLLL) form a UBA-like region. The interval 326 to 651 (RGKPVRLRLS…VEDILSSCKV (326 aa)) is autoinhibitory region. Ser336, Ser343, and Ser356 each carry phosphoserine; by autocatalysis. Position 367 is a phosphotyrosine (Tyr367). Residue Ser391 is modified to Phosphoserine; by autocatalysis. Thr398 carries the post-translational modification Phosphothreonine; by autocatalysis. Ser407 is modified (phosphoserine; by autocatalysis). Thr409 carries the phosphothreonine modification. The residue at position 431 (Ser431) is a Phosphoserine; by autocatalysis. Thr478 carries the phosphothreonine modification. A Phosphothreonine; by autocatalysis modification is found at Thr494. Position 498 is a phosphoserine (Ser498). Phosphoserine; by autocatalysis is present on Ser505. Thr518 is modified (phosphothreonine). Ser529 carries the phosphoserine; by autocatalysis modification. Ser529 carries the phosphoserine modification. Thr539 carries the post-translational modification Phosphothreonine; by autocatalysis. The region spanning 602 to 651 (SDFGKVTMQFELEVCQLQKPDVVGIRRQRLKGDAWVYKRLVEDILSSCKV) is the KA1 domain.

This sequence belongs to the protein kinase superfamily. CAMK Ser/Thr protein kinase family. SNF1 subfamily. Monomer. Interacts with ZNF622 and PPP1R8. In terms of processing, autophosphorylated: autophosphorylation of the T-loop at Thr-167 and Ser-171 is required for activation. Thr-478 phosphorylation during mitosis promotes interaction with PPP1R8. In terms of tissue distribution, expressed in placenta, kidney, thymus, testis, ovary and intestine.

The protein localises to the cell membrane. The catalysed reaction is L-tyrosyl-[protein] + ATP = O-phospho-L-tyrosyl-[protein] + ADP + H(+). It carries out the reaction L-seryl-[protein] + ATP = O-phospho-L-seryl-[protein] + ADP + H(+). It catalyses the reaction L-threonyl-[protein] + ATP = O-phospho-L-threonyl-[protein] + ADP + H(+). Its activity is regulated as follows. Activated by autophosphorylation of the T-loop at Thr-167 and Ser-171: in contrast to other members of the SNF1 subfamily, phosphorylation at Thr-167 is not mediated by STK11/LKB1 but via autophosphorylation instead. Inhibited by calcium-binding. Kinase activity is also regulated by reducing agents: dithiothreitol (DTT) or reduced glutathione are required for kinase activity in vitro; such dependence is however not due to the presence of disulfide bonds. Serine/threonine-protein kinase involved in various processes such as cell cycle regulation, self-renewal of stem cells, apoptosis and splicing regulation. Has a broad substrate specificity; phosphorylates BCL2L14, CDC25B, MAP3K5/ASK1 and ZNF622. Acts as an activator of apoptosis by phosphorylating and activating MAP3K5/ASK1. Acts as a regulator of cell cycle, notably by mediating phosphorylation of CDC25B, promoting localization of CDC25B to the centrosome and the spindle poles during mitosis. Plays a key role in cell proliferation and carcinogenesis. Required for proliferation of embryonic and postnatal multipotent neural progenitors. Phosphorylates and inhibits BCL2L14, possibly leading to affect mammary carcinogenesis by mediating inhibition of the pro-apoptotic function of BCL2L14. Also involved in the inhibition of spliceosome assembly during mitosis by phosphorylating ZNF622, thereby contributing to its redirection to the nucleus. May also play a role in primitive hematopoiesis. The chain is Maternal embryonic leucine zipper kinase (MELK) from Homo sapiens (Human).